The following is a 503-amino-acid chain: Medium/long-chain-fatty-acid--CoA ligase FadD17 (503 aa).

This sequence belongs to the ATP-dependent AMP-binding enzyme family.

The catalysed reaction is a medium-chain fatty acid + ATP + CoA = a medium-chain fatty acyl-CoA + AMP + diphosphate. It carries out the reaction a long-chain fatty acid + ATP + CoA = a long-chain fatty acyl-CoA + AMP + diphosphate. It participates in lipid metabolism; fatty acid biosynthesis. In terms of biological role, catalyzes the activation of medium/long-chain fatty acids as acyl-coenzyme A (acyl-CoA), which are then transferred to the multifunctional polyketide synthase (PKS) type III for further chain extension. The polypeptide is Medium/long-chain-fatty-acid--CoA ligase FadD17 (fadD17) (Mycobacterium marinum (strain ATCC BAA-535 / M)).